The following is a 1131-amino-acid chain: Probable chloride channel protein UM03490-D (1131 aa).

Helical transmembrane passes span 137–157 (GVIV…SLAT), 206–226 (VTVT…PILP), 305–325 (FPAW…CAHL), 341–361 (IKCI…TLAI), 380–397 (GPAV…ASFF), 414–434 (SSAA…LFSL), 485–505 (FEIM…AFVI), 518–538 (YLVK…AFVG), 577–597 (MVNS…VSYG), 603–623 (GIFV…GILV), 643–663 (VPCI…LAGV), and 680–702 (ALTY…DWFS). 2 disordered regions span residues 815–835 (DGVE…LSVA) and 858–928 (ATGA…AGGG). The span at 866-877 (GLGSTSATGVAS) shows a compositional bias: low complexity. The CBS domain occupies 944 to 1000 (IDPTPLIVQPGMPLETVMDMFKNLGPRVILVVEYGRLSGLVTVKDVLKRIAMQEKAE). Over residues 1061–1078 (RASASRGGAPGSQAGQAR) the composition is skewed to low complexity. The interval 1061-1131 (RASASRGGAP…VLGAQDDDDE (71 aa)) is disordered. A compositionally biased stretch (polar residues) spans 1104-1113 (STRQTSATKN).

It belongs to the chloride channel (TC 2.A.49) family.

The protein resides in the membrane. Voltage-gated chloride channel. This is Probable chloride channel protein UM03490-D from Mycosarcoma maydis (Corn smut fungus).